A 170-amino-acid chain; its full sequence is Cyclic pyranopterin monophosphate synthase 1 (170 aa).

Substrate-binding positions include 79–81 and 116–117; these read LCH and ME. The active site involves D131.

It belongs to the MoaC family. In terms of assembly, homohexamer; trimer of dimers.

The enzyme catalyses (8S)-3',8-cyclo-7,8-dihydroguanosine 5'-triphosphate = cyclic pyranopterin phosphate + diphosphate. Its pathway is cofactor biosynthesis; molybdopterin biosynthesis. Functionally, catalyzes the conversion of (8S)-3',8-cyclo-7,8-dihydroguanosine 5'-triphosphate to cyclic pyranopterin monophosphate (cPMP). In Mycobacterium bovis (strain ATCC BAA-935 / AF2122/97), this protein is Cyclic pyranopterin monophosphate synthase 1 (moaC1).